The chain runs to 871 residues: Probable receptor-like protein kinase At2g21480 (871 aa).

The first 39 residues, 1 to 39 (MEIRKKPNIPMCLVLDSSSRPFMTLLFTILLFLTGLASA), serve as a signal peptide directing secretion. Residues 40–439 (VGAVGGSPTA…GQRASMGKQG (400 aa)) lie on the Extracellular side of the membrane. Asn-169, Asn-182, Asn-253, Asn-316, and Asn-381 each carry an N-linked (GlcNAc...) asparagine glycan. A helical membrane pass occupies residues 440-460 (MVATAGFVMMFGAFVGLGAMV). The Cytoplasmic segment spans residues 461 to 871 (YKWKKRPQDW…FTQFASLNGR (411 aa)). In terms of domain architecture, Protein kinase spans 525 to 797 (FDASEIIGVG…GDVLWNLEYA (273 aa)). ATP is bound by residues 531-539 (IGVGGFGNV) and Lys-553. The active-site Proton acceptor is the Asp-649. The segment at 808–871 (KAEAEEVETP…FTQFASLNGR (64 aa)) is disordered. Over residues 817–839 (PKPVAVPAAAPTSPAATTAAASE) the composition is skewed to low complexity. Polar residues predominate over residues 854–871 (DQHSGTTMFTQFASLNGR).

Belongs to the protein kinase superfamily. Ser/Thr protein kinase family.

It is found in the membrane. The protein is Probable receptor-like protein kinase At2g21480 of Arabidopsis thaliana (Mouse-ear cress).